We begin with the raw amino-acid sequence, 893 residues long: DNA mismatch repair protein MutS (893 aa).

637–644 (GPNMGGKS) contacts ATP.

Belongs to the DNA mismatch repair MutS family.

Its function is as follows. This protein is involved in the repair of mismatches in DNA. It is possible that it carries out the mismatch recognition step. This protein has a weak ATPase activity. This is DNA mismatch repair protein MutS from Burkholderia thailandensis (strain ATCC 700388 / DSM 13276 / CCUG 48851 / CIP 106301 / E264).